The chain runs to 244 residues: Carboxy-S-adenosyl-L-methionine synthase (244 aa).

Residues tyrosine 40, 65–67, 90–91, 119–120, asparagine 134, and arginine 201 contribute to the S-adenosyl-L-methionine site; these read GCS, DN, and DL.

Belongs to the class I-like SAM-binding methyltransferase superfamily. Cx-SAM synthase family. In terms of assembly, homodimer.

It catalyses the reaction prephenate + S-adenosyl-L-methionine = carboxy-S-adenosyl-L-methionine + 3-phenylpyruvate + H2O. Catalyzes the conversion of S-adenosyl-L-methionine (SAM) to carboxy-S-adenosyl-L-methionine (Cx-SAM). The sequence is that of Carboxy-S-adenosyl-L-methionine synthase from Trichlorobacter lovleyi (strain ATCC BAA-1151 / DSM 17278 / SZ) (Geobacter lovleyi).